The primary structure comprises 125 residues: Fluoride-specific ion channel FluC (125 aa).

Helical transmembrane passes span 4–24 (PLLAVMIGGCAGCVIRWLLAV), 36–56 (GTLLVNLVGGLIIGATVAWFA), 68–88 (LITTGLCGGMTTFSTFSLEVV), and 100–120 (VISVLTHVTGSLLMTIAGFWL). The Na(+) site is built by Gly-75 and Thr-78.

The protein belongs to the fluoride channel Fluc/FEX (TC 1.A.43) family.

It localises to the cell inner membrane. It carries out the reaction fluoride(in) = fluoride(out). Na(+) is not transported, but it plays an essential structural role and its presence is essential for fluoride channel function. In terms of biological role, fluoride-specific ion channel. Important for reducing fluoride concentration in the cell, thus reducing its toxicity. The polypeptide is Fluoride-specific ion channel FluC (Erwinia tasmaniensis (strain DSM 17950 / CFBP 7177 / CIP 109463 / NCPPB 4357 / Et1/99)).